Reading from the N-terminus, the 1197-residue chain is PAN2-PAN3 deadenylation complex catalytic subunit PAN2 (1197 aa).

WD repeat units follow at residues 153 to 193 (DEAE…QKYT), 195 to 231 (EVPG…VEHE), 244 to 280 (VHGN…ATTP), and 328 to 367 (TVGP…TFNT). The linker stretch occupies residues 368 to 485 (YSRETDFALP…IGREEEPHLY (118 aa)). One can recognise a USP domain in the interval 486-919 (MVAKKYRKVT…VPAILYYARR (434 aa)). Residues 970–1142 (VGLDAEFVTL…EDARTALQLY (173 aa)) form the Exonuclease domain. 4 residues coordinate a divalent metal cation: Asp973, Glu975, Asp1082, and Asp1134. Positions 1176-1197 (VPEPDSQSSPKHGAVFPPVLAL) are disordered.

Belongs to the peptidase C19 family. PAN2 subfamily. Forms a heterotrimer with an asymmetric homodimer of the regulatory subunit PAN3 to form the poly(A)-nuclease (PAN) deadenylation complex. A divalent metal cation serves as cofactor.

The protein resides in the cytoplasm. It is found in the P-body. Its subcellular location is the nucleus. It carries out the reaction Exonucleolytic cleavage of poly(A) to 5'-AMP.. Positively regulated by the regulatory subunit PAN3. In terms of biological role, catalytic subunit of the poly(A)-nuclease (PAN) deadenylation complex, one of two cytoplasmic mRNA deadenylases involved in general and miRNA-mediated mRNA turnover. PAN specifically shortens poly(A) tails of RNA and the activity is stimulated by poly(A)-binding protein (PABP). PAN deadenylation is followed by rapid degradation of the shortened mRNA tails by the CCR4-NOT complex. Deadenylated mRNAs are then degraded by two alternative mechanisms, namely exosome-mediated 3'-5' exonucleolytic degradation, or deadenylation-dependent mRNA decaping and subsequent 5'-3' exonucleolytic degradation by XRN1. The protein is PAN2-PAN3 deadenylation complex catalytic subunit PAN2 of Gallus gallus (Chicken).